Here is a 404-residue protein sequence, read N- to C-terminus: Probable ribosomal oxygenase HI_0396 (404 aa).

The JmjC domain maps to glutamate 102–cysteine 231. Fe cation contacts are provided by histidine 135, aspartate 137, and histidine 199.

This sequence belongs to the ROX family. It depends on Fe(2+) as a cofactor.

In terms of biological role, oxygenase that catalyzes the hydroxylation of a ribosomal protein. In Haemophilus influenzae (strain ATCC 51907 / DSM 11121 / KW20 / Rd), this protein is Probable ribosomal oxygenase HI_0396.